Reading from the N-terminus, the 214-residue chain is Protein verrocchio (214 aa).

Probably homomultimerizes. Component of the MTV complex, composed of moi/modigliani, tea and ver/verrocchio. Interacts with moi/modigliani and tea (via C-terminus); the interactions are direct and require fully intact moi/modigliani and ver/verrocchio. The MTV complex is recruited to telomeres by the HipHop-HOAP complex, consisting of HipHop, cav/HOAP and Su(var)205/HP1 to form the terminin telomere-capping complex. Interacts with cav/HOAP; the interaction is direct. Interacts with Su(var)205/HP1; the interaction is indirect and probably requires cav/HOAP or moi/modigliani. Probably interacts with peo (via N-terminus and UBC domain).

The protein resides in the nucleus. It localises to the chromosome. Its subcellular location is the telomere. Functionally, part of the MTV complex that associates with the HipHop-HOAP complex to form the terminin telomere-capping complex involved in telomere maintenance and prevention of telomere fusion. As part of the MTV complex binds single stranded DNA in a sequence-independent manner, protecting it from degradation. The protein is Protein verrocchio of Drosophila melanogaster (Fruit fly).